The chain runs to 180 residues: Ribosome maturation factor RimM (180 aa).

Residues 104 to 177 enclose the PRC barrel domain; the sequence is PEEFHDHQLV…RVVVDPPGGL (74 aa).

The protein belongs to the RimM family. As to quaternary structure, binds ribosomal protein uS19.

The protein resides in the cytoplasm. An accessory protein needed during the final step in the assembly of 30S ribosomal subunit, possibly for assembly of the head region. Essential for efficient processing of 16S rRNA. May be needed both before and after RbfA during the maturation of 16S rRNA. It has affinity for free ribosomal 30S subunits but not for 70S ribosomes. In Salinispora arenicola (strain CNS-205), this protein is Ribosome maturation factor RimM.